The following is a 275-amino-acid chain: Formamidopyrimidine-DNA glycosylase (275 aa).

The Schiff-base intermediate with DNA role is filled by proline 2. The active-site Proton donor is the glutamate 3. Lysine 58 functions as the Proton donor; for beta-elimination activity in the catalytic mechanism. 3 residues coordinate DNA: histidine 93, arginine 111, and arginine 156. Residues 241-275 form an FPG-type zinc finger; sequence FVYDRAGQPCRVCNTPIRQIVQGQRSTYFCPTCQR. The Proton donor; for delta-elimination activity role is filled by arginine 265.

Belongs to the FPG family. Monomer. Zn(2+) serves as cofactor.

It carries out the reaction Hydrolysis of DNA containing ring-opened 7-methylguanine residues, releasing 2,6-diamino-4-hydroxy-5-(N-methyl)formamidopyrimidine.. It catalyses the reaction 2'-deoxyribonucleotide-(2'-deoxyribose 5'-phosphate)-2'-deoxyribonucleotide-DNA = a 3'-end 2'-deoxyribonucleotide-(2,3-dehydro-2,3-deoxyribose 5'-phosphate)-DNA + a 5'-end 5'-phospho-2'-deoxyribonucleoside-DNA + H(+). Involved in base excision repair of DNA damaged by oxidation or by mutagenic agents. Acts as a DNA glycosylase that recognizes and removes damaged bases. Has a preference for oxidized purines, such as 7,8-dihydro-8-oxoguanine (8-oxoG). Has AP (apurinic/apyrimidinic) lyase activity and introduces nicks in the DNA strand. Cleaves the DNA backbone by beta-delta elimination to generate a single-strand break at the site of the removed base with both 3'- and 5'-phosphates. In Burkholderia lata (strain ATCC 17760 / DSM 23089 / LMG 22485 / NCIMB 9086 / R18194 / 383), this protein is Formamidopyrimidine-DNA glycosylase.